Reading from the N-terminus, the 362-residue chain is 3-isopropylmalate dehydrogenase (362 aa).

Position 78–91 (78–91 (GPQWDTLPSDKRPE)) interacts with NAD(+). Substrate-binding residues include Arg-98, Arg-108, Arg-136, and Asp-226. 3 residues coordinate Mg(2+): Asp-226, Asp-250, and Asp-254. 284–296 (GSAPDIAGQDKAN) contributes to the NAD(+) binding site.

Belongs to the isocitrate and isopropylmalate dehydrogenases family. LeuB type 1 subfamily. Homodimer. Mg(2+) is required as a cofactor. The cofactor is Mn(2+).

It is found in the cytoplasm. The enzyme catalyses (2R,3S)-3-isopropylmalate + NAD(+) = 4-methyl-2-oxopentanoate + CO2 + NADH. The protein operates within amino-acid biosynthesis; L-leucine biosynthesis; L-leucine from 3-methyl-2-oxobutanoate: step 3/4. Functionally, catalyzes the oxidation of 3-carboxy-2-hydroxy-4-methylpentanoate (3-isopropylmalate) to 3-carboxy-4-methyl-2-oxopentanoate. The product decarboxylates to 4-methyl-2 oxopentanoate. The sequence is that of 3-isopropylmalate dehydrogenase from Gloeobacter violaceus (strain ATCC 29082 / PCC 7421).